The sequence spans 464 residues: Argininosuccinate lyase (464 aa).

The protein belongs to the lyase 1 family. Argininosuccinate lyase subfamily.

The protein localises to the cytoplasm. It catalyses the reaction 2-(N(omega)-L-arginino)succinate = fumarate + L-arginine. It functions in the pathway amino-acid biosynthesis; L-arginine biosynthesis; L-arginine from L-ornithine and carbamoyl phosphate: step 3/3. The protein is Argininosuccinate lyase of Janthinobacterium sp. (strain Marseille) (Minibacterium massiliensis).